The primary structure comprises 211 residues: tRNA (pseudouridine(54)-N(1))-methyltransferase (211 aa).

Positions 128, 150, and 183 each coordinate S-adenosyl-L-methionine.

The protein belongs to the methyltransferase superfamily. TrmY family. In terms of assembly, homodimer.

The protein resides in the cytoplasm. The enzyme catalyses pseudouridine(54) in tRNA + S-adenosyl-L-methionine = N(1)-methylpseudouridine(54) in tRNA + S-adenosyl-L-homocysteine + H(+). Functionally, specifically catalyzes the N1-methylation of pseudouridine at position 54 (Psi54) in tRNAs. This chain is tRNA (pseudouridine(54)-N(1))-methyltransferase, found in Methanosarcina acetivorans (strain ATCC 35395 / DSM 2834 / JCM 12185 / C2A).